We begin with the raw amino-acid sequence, 114 residues long: NADH-ubiquinone oxidoreductase chain 3 (114 aa).

Helical transmembrane passes span 3-23 (ATIL…SFWL), 54-74 (FFLI…LLPF), and 85-105 (IVIL…IYEW).

This sequence belongs to the complex I subunit 3 family.

The protein resides in the mitochondrion membrane. The catalysed reaction is a ubiquinone + NADH + 5 H(+)(in) = a ubiquinol + NAD(+) + 4 H(+)(out). Its function is as follows. Core subunit of the mitochondrial membrane respiratory chain NADH dehydrogenase (Complex I) that is believed to belong to the minimal assembly required for catalysis. Complex I functions in the transfer of electrons from NADH to the respiratory chain. The immediate electron acceptor for the enzyme is believed to be ubiquinone. The protein is NADH-ubiquinone oxidoreductase chain 3 (mt-nd3) of Xenopus laevis (African clawed frog).